Reading from the N-terminus, the 179-residue chain is Alpha-S2-casein-like A (179 aa).

A signal peptide spans 1–15 (MKFFIFTCLVAAALA). Phosphoserine is present on residues Ser24 and Ser25. Positions 44–121 (FQTPQDSASS…NAIYDVPSQE (78 aa)) are disordered. Residues 63–74 (ISEKIEQSEEQK) show a composition bias toward basic and acidic residues. The segment covering 93-110 (PQICTPYQQQSSVNQRPQ) has biased composition (polar residues).

This sequence belongs to the alpha-casein family. In terms of tissue distribution, mammary gland specific. Secreted in milk.

The protein localises to the secreted. Functionally, important role in the capacity of milk to transport calcium phosphate. The protein is Alpha-S2-casein-like A (Csn1s2a) of Rattus norvegicus (Rat).